The chain runs to 451 residues: uncharacterized protein (451 aa).

5 helical membrane passes run 11 to 31 (VLLKLIQILFFTISISIYIDL), 56 to 76 (IQIYYWFVGIILFSIAWSIGT), 151 to 171 (IIGIQSCLIIFFSTLGFNIYL), 175 to 195 (FWLIKTIIVDWIISAILLIIF), and 207 to 227 (VYSVISYIFGSNVLGFGTIKI). The disordered stretch occupies residues 250-300 (TKSNNNNNNNNNNKQDDNIIYDTDSSFNGQSSSSSSSSSSSSSSSSSATTT). 2 stretches are compositionally biased toward low complexity: residues 253–262 (NNNNNNNNNN) and 280–300 (SSSSSSSSSSSSSSSSSATTT). 2 helical membrane passes run 392-412 (FVGVIILWVYTISNFIISDYS) and 413-433 (LLTIPNILVVVGFSGTILTYL).

It localises to the membrane. This is an uncharacterized protein from Dictyostelium discoideum (Social amoeba).